The following is a 183-amino-acid chain: Capsid protein (183 aa).

A disordered region spans residues 136–183; the sequence is NAPILSTLPETTVVRRRGRSPRRRTPSPRRRRSQSPRRRRSQSRESQC. The segment covering 149–176 has biased composition (basic residues); that stretch reads VRRRGRSPRRRTPSPRRRRSQSPRRRRS. Ser-155, Ser-162, and Ser-170 each carry phosphoserine; by host. Residues 155-161 form a 1; half-length repeat; that stretch reads SPRRRTP. Positions 155 to 177 are 3 X 8 AA repeats of S-P-R-R-R-[PR]-S-Q; the sequence is SPRRRTPSPRRRRSQSPRRRRSQ. The Bipartite nuclear localization signal signature appears at 158–175; it reads RRTPSPRRRRSQSPRRRR. Repeat copies occupy residues 162-169 and 170-177. Residues 177–183 form an RNA binding region; it reads QSRESQC.

Belongs to the orthohepadnavirus core antigen family. In terms of assembly, homodimerizes, then multimerizes. Interacts with cytosol exposed regions of viral L glycoprotein present in the reticulum-to-Golgi compartment. Interacts with human FLNB. Phosphorylated form interacts with host importin alpha; this interaction depends on the exposure of the NLS, which itself depends upon genome maturation and/or phosphorylation of the capsid protein. Interacts with host NUP153. In terms of processing, phosphorylated by host SRPK1, SRPK2, and maybe protein kinase C or GAPDH. Phosphorylation is critical for pregenomic RNA packaging. Protein kinase C phosphorylation is stimulated by HBx protein and may play a role in transport of the viral genome to the nucleus at the late step during the viral replication cycle.

The protein resides in the virion. Its subcellular location is the host cytoplasm. Functionally, self assembles to form an icosahedral capsid. Most capsids appear to be large particles with an icosahedral symmetry of T=4 and consist of 240 copies of capsid protein, though a fraction forms smaller T=3 particles consisting of 180 capsid proteins. Entering capsids are transported along microtubules to the nucleus. Phosphorylation of the capsid is thought to induce exposure of nuclear localization signal in the C-terminal portion of the capsid protein that allows binding to the nuclear pore complex via the importin (karyopherin-) alpha and beta. Capsids are imported in intact form through the nuclear pore into the nuclear basket, where it probably binds NUP153. Only capsids that contain the mature viral genome can release the viral DNA and capsid protein into the nucleoplasm. Immature capsids get stuck in the basket. Capsids encapsulate the pre-genomic RNA and the P protein. Pre-genomic RNA is reverse-transcribed into DNA while the capsid is still in the cytoplasm. The capsid can then either be directed to the nucleus, providing more genomes for transcription, or bud through the endoplasmic reticulum to provide new virions. This is Capsid protein from Homo sapiens (Human).